The chain runs to 128 residues: UPF0325 protein PMI2289 (128 aa).

The protein belongs to the UPF0325 family.

The protein is UPF0325 protein PMI2289 of Proteus mirabilis (strain HI4320).